The sequence spans 161 residues: RNA pyrophosphohydrolase (161 aa).

A Nudix hydrolase domain is found at 6-149 (GFRPNVGIIL…KRDVYRKAMV (144 aa)). The Nudix box signature appears at 38–59 (GGIQFGETPEQALFRELREEIG).

It belongs to the Nudix hydrolase family. RppH subfamily. A divalent metal cation serves as cofactor.

Its function is as follows. Accelerates the degradation of transcripts by removing pyrophosphate from the 5'-end of triphosphorylated RNA, leading to a more labile monophosphorylated state that can stimulate subsequent ribonuclease cleavage. The protein is RNA pyrophosphohydrolase of Acinetobacter baumannii (strain AB307-0294).